The chain runs to 388 residues: Probable mannan endo-1,4-beta-mannosidase A-1 (388 aa).

The signal sequence occupies residues 1–20 (MKLSPLMALAGLASAQLALA). The substrate site is built by Trp-93 and Asn-206. Glu-207 (proton donor) is an active-site residue. An N-linked (GlcNAc...) asparagine glycan is attached at Asn-264. Position 282 (Tyr-282) interacts with substrate. The active-site Nucleophile is Glu-315. Asn-335 carries an N-linked (GlcNAc...) asparagine glycan. Trp-345 provides a ligand contact to substrate.

The protein belongs to the glycosyl hydrolase 5 (cellulase A) family.

The protein localises to the secreted. The catalysed reaction is Random hydrolysis of (1-&gt;4)-beta-D-mannosidic linkages in mannans, galactomannans and glucomannans.. Functionally, endo-1,4-mannanase, a crucial enzyme for depolymerization of seed galactomannans and wood galactoglucomannans. The polypeptide is Probable mannan endo-1,4-beta-mannosidase A-1 (manA-1) (Aspergillus terreus (strain NIH 2624 / FGSC A1156)).